Here is a 915-residue protein sequence, read N- to C-terminus: Probable serine/threonine-protein kinase dyrk2 (915 aa).

Composition is skewed to low complexity over residues 51–79 (TSNT…PTIS), 108–119 (SSSKSSSNSSSI), 170–185 (SSSS…STTS), and 196–218 (SSNS…SGSS). 3 disordered regions span residues 51–119 (TSNT…SSSI), 132–334 (FSSS…SKSS), and 349–533 (AIKS…PTKS). Residues 234-260 (PSHTISDSPRSSTMKSRSVSISNGSLF) are compositionally biased toward polar residues. Low complexity-rich tracts occupy residues 261 to 287 (SPTN…SSIS), 300 to 333 (SSST…PSKS), 352 to 364 (SRSL…LARV), 379 to 391 (SSSS…SFSS), 399 to 425 (SSSK…ASKI), and 433 to 533 (SLSS…PTKS). A Protein kinase domain is found at 605 to 902 (FEIVSILGQG…AEQGLKHDWI (298 aa)). Residues 611–619 (LGQGSFCQV) and lysine 634 each bind ATP. The active-site Proton acceptor is the aspartate 731.

Belongs to the protein kinase superfamily. CMGC Ser/Thr protein kinase family. MNB/DYRK subfamily.

The catalysed reaction is L-seryl-[protein] + ATP = O-phospho-L-seryl-[protein] + ADP + H(+). The enzyme catalyses L-threonyl-[protein] + ATP = O-phospho-L-threonyl-[protein] + ADP + H(+). It carries out the reaction L-tyrosyl-[protein] + ATP = O-phospho-L-tyrosyl-[protein] + ADP + H(+). The sequence is that of Probable serine/threonine-protein kinase dyrk2 (dyrk2) from Dictyostelium discoideum (Social amoeba).